The chain runs to 262 residues: Abhydrolase domain-containing protein AKT2 (262 aa).

The Peroxisomal targeting signal type 1 signature appears at 260–262 (SKL).

The protein belongs to the AB hydrolase superfamily. AKT2 hydrolase family.

It localises to the peroxisome. The protein operates within mycotoxin biosynthesis. In terms of biological role, abhydrolase domain-containing protein; part of the gene clusters that mediate the biosynthesis of the host-selective toxins (HSTs) AK-toxins responsible for Japanese pear black spot disease by the Japanese pear pathotype. AK-toxins are esters of 9,10-epoxy 8-hydroxy 9-methyldecatrienoic acid (EDA). On cellular level, AK-toxins affect plasma membrane of susceptible cells and cause a sudden increase in loss of K(+) after a few minutes of toxin treatment. The acyl-CoA ligase AKT1, the hydrolase AKT2 and enoyl-CoA hydratase AKT3 are all involved in the biosynthesis of the AK-, AF- and ACT-toxin common 9,10-epoxy-8-hydroxy-9-methyl-decatrienoic acid (EDA) structural moiety. Part of the EDA biosynthesis occurs in the peroxisome since these 3 enzymes are localized in peroxisomes. The exact roles of the 3 enzymes, as well as of additional AK-toxin clusters enzymes, including AKT4, AKT6 and AKTS1, have still to be elucidated. The Cytochrome P450 monooxygenase AKT7 on the other side functions to limit production of EDA and AK-toxin, probably via the catalysis of a side reaction of EDA or its precursor. The polypeptide is Abhydrolase domain-containing protein AKT2 (Alternaria alternata (Alternaria rot fungus)).